We begin with the raw amino-acid sequence, 100 residues long: Putative membrane protein insertion efficiency factor (100 aa).

It belongs to the UPF0161 family.

It is found in the cell membrane. Could be involved in insertion of integral membrane proteins into the membrane. This is Putative membrane protein insertion efficiency factor from Enterococcus faecalis (strain ATCC 700802 / V583).